The primary structure comprises 153 residues: NADPH-dependent 7-cyano-7-deazaguanine reductase (153 aa).

C51 acts as the Thioimide intermediate in catalysis. D58 functions as the Proton donor in the catalytic mechanism. Substrate contacts are provided by residues 73-75 (VES) and 92-93 (HE).

It belongs to the GTP cyclohydrolase I family. QueF type 1 subfamily.

Its subcellular location is the cytoplasm. The enzyme catalyses 7-aminomethyl-7-carbaguanine + 2 NADP(+) = 7-cyano-7-deazaguanine + 2 NADPH + 3 H(+). The protein operates within tRNA modification; tRNA-queuosine biosynthesis. Catalyzes the NADPH-dependent reduction of 7-cyano-7-deazaguanine (preQ0) to 7-aminomethyl-7-deazaguanine (preQ1). The protein is NADPH-dependent 7-cyano-7-deazaguanine reductase of Granulibacter bethesdensis (strain ATCC BAA-1260 / CGDNIH1).